Here is a 45-residue protein sequence, read N- to C-terminus: Large ribosomal subunit protein bL34 (45 aa).

It belongs to the bacterial ribosomal protein bL34 family.

The sequence is that of Large ribosomal subunit protein bL34 (rpmH) from Streptomyces bikiniensis.